Consider the following 493-residue polypeptide: MEKVREIVREGIRVGNEDPRRIIHAFKVGLALVLVSSFYYYQPFGPFTDYFGINAMWAVMTVVVVFEFSVGATLGKGLNRGVATLVAGGLGIGAHQLARLSGATVEPILLVMLVFVQAALSTFVRFFPWVKTKFDYGILIFILTFALISLSGFRDEEIMDLAESRLSTVVIGGVSCILISIFVCPVWAGQDLHSLLASNFDTLSHFLQDFGDEYFEAREKGDYKVVEKRKKNLERYKSVLDSKSDEEALANYAEWEPPHGQFRFRHPWKQYVAVGALLRQCAYRIDALNSYINSDFQIPVDIKKKLETPLRRMSSESGNSMKEMSISLKQMIKSSSSDIHVSNSQAACKSLSTLLKSGILNDVEPLQMISLMTTVSMLIDIVNLTEKISESVHELASAARFKNKMRPTVLYEKSDSGSIGRAMPIDSHEDHHVVTVLHDVDNDRSNNVDDSRGGSSQDSCHHVAIKIVDDNSNHEKHEDGEIHVHTLSNGHLQ.

Transmembrane regions (helical) follow at residues V28–T48, F51–G71, T104–V124, K133–F153, and V169–G189. Phosphoserine is present on residues S320 and S327. T385 bears the Phosphothreonine mark. Residues D441–R452 are compositionally biased toward basic and acidic residues. Positions D441–C460 are disordered.

This sequence belongs to the aromatic acid exporter (TC 2.A.85) family. In terms of processing, phosphorylated. A reversible phosphorylation is required for activation. Expressed in roots, but not in shoots. Detected in the root apex in absence of aluminum stress and in root apices, the stele and endodermis of the elongating zone of primary and lateral roots after aluminum stress. Not expressed in cortical and epidermal cells.

The protein resides in the cell membrane. Activated by external aluminum. In terms of biological role, malate transporter critical for aluminum tolerance. The STOP1 transcription factor is required for ALMT1 expression. In Arabidopsis thaliana (Mouse-ear cress), this protein is Aluminum-activated malate transporter 1 (ALMT1).